Here is a 422-residue protein sequence, read N- to C-terminus: ATP-dependent RNA helicase RhlB (422 aa).

Positions 9 to 37 match the Q motif motif; that stretch reads QKFSDFALHPLVIKAIENQGFYHCTPIQA. Residues 40 to 219 form the Helicase ATP-binding domain; it reads FPITLAGRDV…FEQMNHPEYI (180 aa). 53–60 lines the ATP pocket; it reads AQTGTGKT. Positions 165–168 match the DEAD box motif; sequence DEAD. The Helicase C-terminal domain occupies 245–390; that stretch reads RLLQTLIEEE…TSEYNKEALL (146 aa). A disordered region spans residues 394–422; the sequence is PQPKRLQRHHRHYAGSRNQGASRKPRSPQ. Basic residues predominate over residues 398–407; it reads RLQRHHRHYA.

It belongs to the DEAD box helicase family. RhlB subfamily. Component of the RNA degradosome, which is a multiprotein complex involved in RNA processing and mRNA degradation.

The protein localises to the cytoplasm. The enzyme catalyses ATP + H2O = ADP + phosphate + H(+). DEAD-box RNA helicase involved in RNA degradation. Has RNA-dependent ATPase activity and unwinds double-stranded RNA. This chain is ATP-dependent RNA helicase RhlB, found in Hamiltonella defensa subsp. Acyrthosiphon pisum (strain 5AT).